The sequence spans 405 residues: Protochlorophyllide reductase A, chloroplastic (405 aa).

The N-terminal 69 residues, 1-69 (MALQAASLVS…LRNNKAIIRA (69 aa)), are a transit peptide targeting the chloroplast.

This sequence belongs to the short-chain dehydrogenases/reductases (SDR) family. POR subfamily. As to quaternary structure, forms large complexes including TOC33, pPORA and OEP161 during pPORA import into plastids at the plastid envelope membrane. Interacts with CPP1 during plastid import. Expressed in young seedlings. Not detected in leaves.

Its subcellular location is the plastid. It is found in the chloroplast. It carries out the reaction chlorophyllide a + NADP(+) = protochlorophyllide a + NADPH + H(+). It functions in the pathway porphyrin-containing compound metabolism; chlorophyll biosynthesis. Its function is as follows. Phototransformation of protochlorophyllide (Pchlide) to chlorophyllide (Chlide). PORA may also function as a photoprotectant during the transitory stage from dark to light. Functions in skotomorphogenesis, photomorphogenesis and throughout the plant life under specific light conditions. The polypeptide is Protochlorophyllide reductase A, chloroplastic (PORA) (Arabidopsis thaliana (Mouse-ear cress)).